Here is a 396-residue protein sequence, read N- to C-terminus: Cell adhesion molecule 3 (396 aa).

The N-terminal stretch at 1-22 (MGAPSALPLLLLLACSWAPGGA) is a signal peptide. The region spanning 23–124 (NLSQDDSQPW…VRTAKSLVTV (102 aa)) is the Ig-like V-type domain. Topologically, residues 23 to 328 (NLSQDDSQPW…PVPSSSSTYH (306 aa)) are extracellular. Intrachain disulfides connect Cys48–Cys108, Cys150–Cys207, and Cys252–Cys297. 2 Ig-like C2-type domains span residues 128-226 (PQKP…QRIE) and 231-313 (PTAM…FTLN). A glycan (N-linked (GlcNAc...) asparagine) is linked at Asn288. A helical transmembrane segment spans residues 329 to 349 (AIIGGIVAFIVFLLLILLIFL). At 350 to 396 (GHYLIRHKGTYLTHEAKGSDDAPDADTAIINAEGGQSGGDDKKEYFI) the chain is on the cytoplasmic side. The tract at residues 365–396 (AKGSDDAPDADTAIINAEGGQSGGDDKKEYFI) is disordered. At Ser386 the chain carries Phosphoserine.

This sequence belongs to the nectin family. In terms of assembly, homodimer. Can form trans-heterodimers with NECTIN3. Interacts with EPB41L1, DLG3, PALS2 and CASK.

Its subcellular location is the cell membrane. It is found in the cell junction. In terms of biological role, involved in cell-cell adhesion. Has both calcium-independent homophilic cell-cell adhesion activity and calcium-independent heterophilic cell-cell adhesion activity with IGSF4, NECTIN1 and NECTIN3. Interaction with EPB41L1 may regulate structure or function of cell-cell junctions. This is Cell adhesion molecule 3 (Cadm3) from Rattus norvegicus (Rat).